The primary structure comprises 289 residues: tRNA U34 carboxymethyltransferase (289 aa).

Carboxy-S-adenosyl-L-methionine-binding positions include Lys60, Trp74, Lys79, Gly98, 120 to 122 (DPS), 147 to 148 (VE), Tyr167, and Arg282.

The protein belongs to the class I-like SAM-binding methyltransferase superfamily. CmoB family. In terms of assembly, homotetramer.

It carries out the reaction carboxy-S-adenosyl-L-methionine + 5-hydroxyuridine(34) in tRNA = 5-carboxymethoxyuridine(34) in tRNA + S-adenosyl-L-homocysteine + H(+). In terms of biological role, catalyzes carboxymethyl transfer from carboxy-S-adenosyl-L-methionine (Cx-SAM) to 5-hydroxyuridine (ho5U) to form 5-carboxymethoxyuridine (cmo5U) at position 34 in tRNAs. This Campylobacter concisus (strain 13826) protein is tRNA U34 carboxymethyltransferase.